Here is a 125-residue protein sequence, read N- to C-terminus: Protein ApaG (125 aa).

The region spanning 1-125 is the ApaG domain; the sequence is MIEQPRICVQ…FRLAIPALIH (125 aa).

This Yersinia pestis bv. Antiqua (strain Antiqua) protein is Protein ApaG.